A 150-amino-acid chain; its full sequence is Flagellar assembly factor FliW (150 aa).

Belongs to the FliW family. In terms of assembly, interacts with translational regulator CsrA and flagellin(s).

The protein resides in the cytoplasm. In terms of biological role, acts as an anti-CsrA protein, binds CsrA and prevents it from repressing translation of its target genes, one of which is flagellin. Binds to flagellin and participates in the assembly of the flagellum. This is Flagellar assembly factor FliW from Leptospira borgpetersenii serovar Hardjo-bovis (strain L550).